The following is a 261-amino-acid chain: tRNA pseudouridine synthase A (261 aa).

The active-site Nucleophile is Asp52. Tyr110 contributes to the substrate binding site.

This sequence belongs to the tRNA pseudouridine synthase TruA family. In terms of assembly, homodimer.

It carries out the reaction uridine(38/39/40) in tRNA = pseudouridine(38/39/40) in tRNA. Functionally, formation of pseudouridine at positions 38, 39 and 40 in the anticodon stem and loop of transfer RNAs. The sequence is that of tRNA pseudouridine synthase A from Blochmanniella pennsylvanica (strain BPEN).